We begin with the raw amino-acid sequence, 551 residues long: Crossover junction endonuclease EME1B (551 aa).

2 disordered regions span residues 1–55 (MNDH…PIFV) and 187–239 (TTLP…RLEK). Residues 37 to 51 (SDPTPQKQPPESSFT) are compositionally biased toward polar residues. Residues 202-239 (SKEDKTSAMEEKKLRKEQERLEKAASKAEEAERKRLEK) show a composition bias toward basic and acidic residues. Positions 203–253 (KEDKTSAMEEKKLRKEQERLEKAASKAEEAERKRLEKEKKKWEKGKLALKS) form a coiled coil. Residues 287-484 (NPIERSIVWT…PSMKSLLKVY (198 aa)) form the ERCC4 domain.

It belongs to the EME1/MMS4 family. Forms a heterodimer with MUS81. Mg(2+) is required as a cofactor. Requires Ca(2+) as cofactor.

It localises to the nucleus. Interacts with MUS81 to form a DNA structure-specific endonuclease with substrate preference for branched DNA structures with a 5'-end at the branch nick. Typical substrates include 3'-flap structures, D-loops, replication forks, nicked Holliday junctions and also intact Holliday junctions with a reduced efficiency. May be required in mitosis for the processing of stalled or collapsed replication fork intermediates. Plays a role in DNA repair and in genotoxic stress-induced homologous recombination (HR) in somatic cells. Mediates a subset of meiotic recombination events that are insensitive to crossover interference. In Arabidopsis thaliana (Mouse-ear cress), this protein is Crossover junction endonuclease EME1B (EME1B).